The following is an 889-amino-acid chain: MGCLGNQLLIALLLLSASGIYCVQYVTVFYGIPAWRNATVPLFCATKNRDTWGTTQCLPDNGDYSELAINVTEAFDAWDNTVTEQAIEDVWNLFETSIKPCVKLTPLCITMRCNKSETDRWGLTGTPAPTTTQTTTTQASTTPTSPITAKVVNDSDPCIKINNCTGLEQEPMVSCKFNMTGLKRDKKREYNETWYSRDLVCEQNSNETDSKCYMNHCNTSVIQESCDKHYWDAIRFRYCAPPGYALLRCNDSNYSGFAPNCTKVVVSSCTRMMETQTSTWFGFNGTRAENRTYIYWHGRSNRTIISLNKYYNLTMRCRRPGNKTVLPVTIMSGLVFHSQPINERPKQAWCWFGGEWKKAIQEVKETLVKHPRYTGTNKTEQIKLTAPGGGDPEVTFMWTNCRGEFLYCKMNWFLNWVENIQNGSRWTSQNQKERQRRNYVPCHIRQIINTWHKVGKNVYLPPREGDLTCNSTVTSLIAEIDWINGNETNITMSAEVAELYRLELGDYKLVEITPIAFAPTSVKRYTTTGASRNKRGVFVLGFLGFLATAGSAMSAASVTLSAQSRTLLAGIVQQQQQLLDVVKRQQELLRLTVWGAKNLQTRVTAIEKYLKDQAQLNSWGCAFRQVCHTTVPRPNDTLTPNWNNMTWQEWEKQVNFLEANITQSLEEAQIQQEKNTYELQKLNSWDIFGNWFDLTSWIKYIQYGVLIVLGVIGLRIVIYVVQMLARLRQGYRPVFSSPPAYVQQIPIQTGQELPTKEGEEGDGGGRGGNRSWPWQIEYIHFLIRQLIRLLTWLFSSCRDWLLRNCQTLQPVLQSLSRTLQRAREVIRVQIAYLQYGWRYLQEAAQAWWKFVRETLASAWRDLWETLGRVGRGILAIPRRIRQGLELTLL.

The N-terminal stretch at 1–22 (MGCLGNQLLIALLLLSASGIYC) is a signal peptide. The Extracellular portion of the chain corresponds to 23–704 (VQYVTVFYGI…TSWIKYIQYG (682 aa)). A glycan (N-linked (GlcNAc...) asparagine; by host) is linked at Asn-37. The cysteines at positions 44 and 57 are disulfide-linked. N-linked (GlcNAc...) asparagine; by host glycans are attached at residues Asn-70 and Asn-114. Disulfide bonds link Cys-101–Cys-226, Cys-108–Cys-217, Cys-113–Cys-175, Cys-239–Cys-269, and Cys-249–Cys-261. Residues 113 to 174 (CNKSETDRWG…TGLEQEPMVS (62 aa)) are V1. A disordered region spans residues 120 to 145 (RWGLTGTPAPTTTQTTTTQASTTPTS). A compositionally biased stretch (low complexity) spans 126 to 145 (TPAPTTTQTTTTQASTTPTS). N-linked (GlcNAc...) asparagine; by host glycosylation is found at Asn-153, Asn-163, Asn-178, Asn-191, Asn-206, Asn-218, Asn-250, Asn-253, Asn-260, Asn-284, Asn-290, Asn-301, Asn-312, Asn-322, Asn-377, Asn-422, Asn-470, Asn-486, and Asn-489. Residues 175 to 217 (CKFNMTGLKRDKKREYNETWYSRDLVCEQNSNETDSKCYMNHC) form a V2 region. Residues 317-349 (CRRPGNKTVLPVTIMSGLVFHSQPINERPKQAW) form a V3 region. Cys-317 and Cys-350 are disulfide-bonded. Disulfide bonds link Cys-401–Cys-469 and Cys-408–Cys-442. Positions 408 to 442 (CKMNWFLNWVENIQNGSRWTSQNQKERQRRNYVPC) are V4. Residues 485-492 (GNETNITM) are V5. The tract at residues 536–556 (GVFVLGFLGFLATAGSAMSAA) is fusion peptide. The immunosuppression stretch occupies residues 599-615 (LQTRVTAIEKYLKDQAQ). N-linked (GlcNAc...) asparagine; by host glycosylation is found at Asn-635, Asn-644, and Asn-660. A coiled-coil region spans residues 648–675 (QEWEKQVNFLEANITQSLEEAQIQQEKN). Positions 681 to 702 (KLNSWDIFGNWFDLTSWIKYIQ) are MPER; binding to GalCer. A helical transmembrane segment spans residues 705 to 725 (VLIVLGVIGLRIVIYVVQMLA). Over 726-889 (RLRQGYRPVF…IRQGLELTLL (164 aa)) the chain is Cytoplasmic. The YXXV motif; contains endocytosis signal signature appears at 731 to 734 (YRPV). Cys-797 carries the S-palmitoyl cysteine; by host lipid modification. A Di-leucine internalization motif motif is present at residues 888–889 (LL).

As to quaternary structure, the mature envelope protein (Env) consists of a homotrimer of non-covalently associated gp120-gp41 heterodimers. The resulting complex protrudes from the virus surface as a spike. Interacts with host CD4 and CCR5. Gp120 also interacts with the C-type lectins CD209/DC-SIGN and CLEC4M/DC-SIGNR (collectively referred to as DC-SIGN(R)). In terms of assembly, the mature envelope protein (Env) consists of a homotrimer of non-covalently associated gp120-gp41 heterodimers. The resulting complex protrudes from the virus surface as a spike. In terms of processing, specific enzymatic cleavages in vivo yield mature proteins. Envelope glycoproteins are synthesized as an inactive precursor that is heavily N-glycosylated and processed likely by host cell furin in the Golgi to yield the mature SU and TM proteins. The cleavage site between SU and TM requires the minimal sequence [KR]-X-[KR]-R. Post-translationally, palmitoylation of the transmembrane protein and of Env polyprotein (prior to its proteolytic cleavage) is essential for their association with host cell membrane lipid rafts. Palmitoylation is therefore required for envelope trafficking to classical lipid rafts, but not for viral replication.

The protein localises to the virion membrane. It is found in the host cell membrane. It localises to the host endosome membrane. Its function is as follows. The surface protein gp120 (SU) attaches the virus to the host lymphoid cell by binding to the primary receptor CD4. This interaction induces a structural rearrangement creating a high affinity binding site for a chemokine coreceptor like CCR5. This peculiar 2 stage receptor-interaction strategy allows gp120 to maintain the highly conserved coreceptor-binding site in a cryptic conformation, protected from neutralizing antibodies. These changes are transmitted to the transmembrane protein gp41 and are thought to activate its fusogenic potential by unmasking its fusion peptide. In terms of biological role, surface protein gp120 (SU) may target the virus to gut-associated lymphoid tissue (GALT) by binding host ITGA4/ITGB7 (alpha-4/beta-7 integrins), a complex that mediates T-cell migration to the GALT. Interaction between gp120 and ITGA4/ITGB7 would allow the virus to enter GALT early in the infection, infecting and killing most of GALT's resting CD4+ T-cells. This T-cell depletion is believed to be the major insult to the host immune system leading to AIDS. Functionally, the surface protein gp120 is a ligand for CD209/DC-SIGN and CLEC4M/DC-SIGNR, which are respectively found on dendritic cells (DCs), and on endothelial cells of liver sinusoids and lymph node sinuses. These interactions allow capture of viral particles at mucosal surfaces by these cells and subsequent transmission to permissive cells. DCs are professional antigen presenting cells, critical for host immunity by inducing specific immune responses against a broad variety of pathogens. They act as sentinels in various tissues where they take up antigen, process it, and present it to T-cells following migration to lymphoid organs. SIV subverts the migration properties of dendritic cells to gain access to CD4+ T-cells in lymph nodes. Virus transmission to permissive T-cells occurs either in trans (without DCs infection, through viral capture and transmission), or in cis (following DCs productive infection, through the usual CD4-gp120 interaction), thereby inducing a robust infection. In trans infection, bound virions remain infectious over days and it is proposed that they are not degraded, but protected in non-lysosomal acidic organelles within the DCs close to the cell membrane thus contributing to the viral infectious potential during DCs' migration from the periphery to the lymphoid tissues. On arrival at lymphoid tissues, intact virions recycle back to DCs' cell surface allowing virus transmission to CD4+ T-cells. Virion capture also seems to lead to MHC-II-restricted viral antigen presentation, and probably to the activation of SIV-specific CD4+ cells. The transmembrane protein gp41 (TM) acts as a class I viral fusion protein. Under the current model, the protein has at least 3 conformational states: pre-fusion native state, pre-hairpin intermediate state, and post-fusion hairpin state. During fusion of viral and target intracellular membranes, the coiled coil regions (heptad repeats) assume a trimer-of-hairpins structure, positioning the fusion peptide in close proximity to the C-terminal region of the ectodomain. The formation of this structure appears to drive apposition and subsequent fusion of viral and target cell membranes. Complete fusion occurs in host cell endosomes. The virus undergoes clathrin-dependent internalization long before endosomal fusion, thus minimizing the surface exposure of conserved viral epitopes during fusion and reducing the efficacy of inhibitors targeting these epitopes. Membranes fusion leads to delivery of the nucleocapsid into the cytoplasm. Its function is as follows. The envelope glycoprotein gp160 precursor down-modulates cell surface CD4 antigen by interacting with it in the endoplasmic reticulum and blocking its transport to the cell surface. In terms of biological role, the gp120-gp41 heterodimer allows rapid transcytosis of the virus through CD4 negative cells such as simple epithelial monolayers of the intestinal, rectal and endocervical epithelial barriers. Both gp120 and gp41 specifically recognize glycosphingolipids galactosyl-ceramide (GalCer) or 3' sulfo-galactosyl-ceramide (GalS) present in the lipid rafts structures of epithelial cells. Binding to these alternative receptors allows the rapid transcytosis of the virus through the epithelial cells. This transcytotic vesicle-mediated transport of virions from the apical side to the basolateral side of the epithelial cells does not involve infection of the cells themselves. The polypeptide is Envelope glycoprotein gp160 (env) (Simian immunodeficiency virus (isolate PBj14/BCL-3) (SIV-sm)).